A 340-amino-acid polypeptide reads, in one-letter code: Short-chain dehydrogenase/reductase prx1 (340 aa).

5 residues coordinate NADP(+): Ile60, Lys84, Asp104, Asn131, and Lys162. The active-site Proton donor is the Ser184. The NADP(+) site is built by Tyr210 and Lys214. Residue Tyr210 is the Proton acceptor of the active site. The active-site Lowers pKa of active site Tyr is the Lys214.

Belongs to the short-chain dehydrogenases/reductases (SDR) family.

The protein operates within sesquiterpene biosynthesis. Short-chain dehydrogenase/reductase; part of the gene cluster that mediates the biosynthesis of PR-toxin, a bicyclic sesquiterpene belonging to the eremophilane class and acting as a mycotoxin. The first step of the pathway is catalyzed by the aristolochene synthase which performs the cyclization of trans,trans-farnesyl diphosphate (FPP) to the bicyclic sesquiterpene aristolochene. Following the formation of aristolochene, the non-oxygenated aristolochene is converted to the trioxygenated intermediate eremofortin B, via 7-epi-neopetasone. This conversion appears to involve three enzymes, a hydroxysterol oxidase-like enzyme, the quinone-oxidase prx3 that forms the quinone-type-structure in the bicyclic nucleus of aristolochene with the C8-oxo group and the C-3 hydroxyl group, and the P450 monooxygenase ORF6 that introduces the epoxide at the double bond between carbons 1 and 2. No monoxy or dioxy-intermediates have been reported to be released to the broth, so these three early oxidative reactions may be coupled together. Eremofortin B is further oxidized by another P450 monooxygenase, that introduces a second epoxide between carbons 7 and 11 prior to acetylation to eremofortin A by the acetyltransferase ORF8. The second epoxidation may be performed by a second P450 monooxygenase. After the acetylation step, eremofortin A is converted to eremofortin C and then to PR-toxin. First the conversion of eremofortin A to eremofortin C proceeds by oxidation of the side chain of the molecule at C-12 and is catalyzed by the short-chain oxidoreductase prx1. The cytochrome P450 monooxygenase ORF6 is probably also involved in this step. The primary alcohol formed at C-12 is finally oxidized by the short-chain alcohol dehydrogenase prx4 that forms PR-toxin. The protein is Short-chain dehydrogenase/reductase prx1 of Penicillium roqueforti (strain FM164).